The primary structure comprises 335 residues: MRIGIVNDMPLAVEALRRALAFEPQHQIVWVASNGAEAVTQCAADTPDVVLMDLLMPVMDGVEATRRIMAESPCAIVIVTVDIEQNVHRVFEAMGYGALDAVNTPALGIGNPQTAAAPLLRKIQNVGWLIGQRDNRGKVQVVPPKAGGARQRLVAIGASAGGPASLAVLLKQLPASFNAAVVLVQHVDEVFAAGMAEWLASESKLPVRLARDGEPPIPGQILLAGTNNHIRLLRNGSLVYTAEPRSFVYRPSIDVFFESVANYWRGDAVGVLLTGMGRDGAQGLKQMRERGFLTIAQDQASCAVYGMPKAAAAIDAAVQILSLEKIAPRLAEVFD.

In terms of domain architecture, Response regulatory spans 2-119 (RIGIVNDMPL…GNPQTAAAPL (118 aa)). D53 carries the 4-aspartylphosphate modification. The 192-residue stretch at 144–335 (PKAGGARQRL…IAPRLAEVFD (192 aa)) folds into the CheB-type methylesterase domain. Catalysis depends on residues S159, H186, and D279.

Belongs to the CheB family. Phosphorylated by CheA. Phosphorylation of the N-terminal regulatory domain activates the methylesterase activity.

The protein resides in the cytoplasm. The catalysed reaction is [protein]-L-glutamate 5-O-methyl ester + H2O = L-glutamyl-[protein] + methanol + H(+). It carries out the reaction L-glutaminyl-[protein] + H2O = L-glutamyl-[protein] + NH4(+). Its function is as follows. Involved in chemotaxis. Part of a chemotaxis signal transduction system that modulates chemotaxis in response to various stimuli. Catalyzes the demethylation of specific methylglutamate residues introduced into the chemoreceptors (methyl-accepting chemotaxis proteins or MCP) by CheR. Also mediates the irreversible deamidation of specific glutamine residues to glutamic acid. This Pseudomonas aeruginosa (strain ATCC 15692 / DSM 22644 / CIP 104116 / JCM 14847 / LMG 12228 / 1C / PRS 101 / PAO1) protein is Protein-glutamate methylesterase/protein-glutamine glutaminase 3.